Reading from the N-terminus, the 166-residue chain is MFWLLTSLFIILLYLIYSPLQRTYQQIKLETEATNKILDDPEYLERMIRRRYAPLHALPRVEFNASFDTLEGPGGGHCFSQPVRVSRQDLVTYDCASLCDDVRAAYFYVGPYDRLVVDGNELQEGGYCTTNSVPRNCNRETSILLHSINHWTCIAEDPRYYAGRTG.

This is an uncharacterized protein from Xestia (XnGV).